Consider the following 123-residue polypeptide: Ribonuclease P protein component (123 aa).

This sequence belongs to the RnpA family. As to quaternary structure, consists of a catalytic RNA component (M1 or rnpB) and a protein subunit.

The catalysed reaction is Endonucleolytic cleavage of RNA, removing 5'-extranucleotides from tRNA precursor.. RNaseP catalyzes the removal of the 5'-leader sequence from pre-tRNA to produce the mature 5'-terminus. It can also cleave other RNA substrates such as 4.5S RNA. The protein component plays an auxiliary but essential role in vivo by binding to the 5'-leader sequence and broadening the substrate specificity of the ribozyme. This chain is Ribonuclease P protein component, found in Bordetella bronchiseptica (strain ATCC BAA-588 / NCTC 13252 / RB50) (Alcaligenes bronchisepticus).